The chain runs to 277 residues: Carbonyl reductase [NADPH] 3 (277 aa).

Ser-2 bears the N-acetylserine mark. NADP(+) is bound by residues 10-34, 38-42, 63-64, and Asn-90; these read VTGANKGIGFAITRDLCRKFSGDVV, RDEAR, and DI. Ser-30 bears the Phosphoserine mark. Ser-140 provides a ligand contact to substrate. Tyr-194 functions as the Proton acceptor in the catalytic mechanism. Position 194–198 (194–198) interacts with NADP(+); sequence YGVSK.

The protein belongs to the short-chain dehydrogenases/reductases (SDR) family.

Its subcellular location is the cytoplasm. The catalysed reaction is a secondary alcohol + NADP(+) = a ketone + NADPH + H(+). The enzyme catalyses a quinone + NADPH + H(+) = a quinol + NADP(+). Its function is as follows. Catalyzes the NADPH-dependent reduction of carbonyl compounds to their corresponding alcohols. Has low NADPH-dependent oxidoreductase activity. Acts on several orthoquinones, as well as on non-quinone compounds, such as isatin or on the anticancer drug oracin. Best substrates for CBR3 is 1,2- naphthoquinone, hence could play a role in protection against cytotoxicity of exogenous quinones. Exerts activity toward ortho-quinones but not paraquinones. No endogenous substrate for CBR3 except isatin has been identified. The chain is Carbonyl reductase [NADPH] 3 from Rattus norvegicus (Rat).